The following is a 149-amino-acid chain: MERTYLMIKPDGVQRGLVGEIIARFEKRGFKIVGLKMIRIGRELAEKHYGEHKGKPFFEPLVGYITSSPVVAMVIEGKNAVGAAREMMGATDPLKAAPGTIRGTYGIDIGRNVIHGSDSPASAQREIALFFSADELMEYGLELDRWVYE.

ATP is bound by residues Lys-9, Phe-57, Arg-85, Thr-91, Arg-102, and Asn-112. The active-site Pros-phosphohistidine intermediate is the His-115.

The protein belongs to the NDK family. Homotetramer. The cofactor is Mg(2+).

It localises to the cytoplasm. The catalysed reaction is a 2'-deoxyribonucleoside 5'-diphosphate + ATP = a 2'-deoxyribonucleoside 5'-triphosphate + ADP. The enzyme catalyses a ribonucleoside 5'-diphosphate + ATP = a ribonucleoside 5'-triphosphate + ADP. In terms of biological role, major role in the synthesis of nucleoside triphosphates other than ATP. The ATP gamma phosphate is transferred to the NDP beta phosphate via a ping-pong mechanism, using a phosphorylated active-site intermediate. This chain is Nucleoside diphosphate kinase, found in Pelotomaculum thermopropionicum (strain DSM 13744 / JCM 10971 / SI).